Here is a 304-residue protein sequence, read N- to C-terminus: Glycine--tRNA ligase alpha subunit (304 aa).

The protein belongs to the class-II aminoacyl-tRNA synthetase family. In terms of assembly, tetramer of two alpha and two beta subunits.

Its subcellular location is the cytoplasm. The catalysed reaction is tRNA(Gly) + glycine + ATP = glycyl-tRNA(Gly) + AMP + diphosphate. The protein is Glycine--tRNA ligase alpha subunit of Tolumonas auensis (strain DSM 9187 / NBRC 110442 / TA 4).